The following is a 206-amino-acid chain: Ubiquitin-conjugating enzyme E2 S (206 aa).

Residues 14-160 (QTIRQVMKEL…ARMMTEIHAQ (147 aa)) form the UBC core domain. Residue Cys98 is the Glycyl thioester intermediate of the active site. The segment at 165-191 (GVSDAKDDDGPSNKKHAGLDKKLQDKK) is disordered. The span at 168–191 (DAKDDDGPSNKKHAGLDKKLQDKK) shows a compositional bias: basic and acidic residues.

The protein belongs to the ubiquitin-conjugating enzyme family.

The enzyme catalyses S-ubiquitinyl-[E1 ubiquitin-activating enzyme]-L-cysteine + [E2 ubiquitin-conjugating enzyme]-L-cysteine = [E1 ubiquitin-activating enzyme]-L-cysteine + S-ubiquitinyl-[E2 ubiquitin-conjugating enzyme]-L-cysteine.. The protein operates within protein modification; protein ubiquitination. Its function is as follows. Catalyzes the covalent attachment of ubiquitin to other proteins. Acts as an essential factor of the anaphase promoting complex/cyclosome (APC/C), a cell cycle-regulated ubiquitin ligase that controls progression through mitosis. Acts by specifically elongating polyubiquitin chains initiated by the E2 enzyme vih/UbcH10 on APC/C substrates, enhancing the degradation of APC/C substrates by the proteasome and promoting mitotic exit. The polypeptide is Ubiquitin-conjugating enzyme E2 S (Drosophila mojavensis (Fruit fly)).